A 95-amino-acid polypeptide reads, in one-letter code: Citrate lyase acyl carrier protein (95 aa).

Serine 14 carries the O-(phosphoribosyl dephospho-coenzyme A)serine modification.

It belongs to the CitD family. As to quaternary structure, oligomer with a subunit composition of (alpha,beta,gamma)6.

Its subcellular location is the cytoplasm. In terms of biological role, covalent carrier of the coenzyme of citrate lyase. This is Citrate lyase acyl carrier protein from Haemophilus influenzae (strain PittEE).